We begin with the raw amino-acid sequence, 552 residues long: Leucine-rich repeat-containing protein 31 (552 aa).

Residues 1 to 65 (MSQTRKKTSS…SETAKPLSSE (65 aa)) are disordered. Residues 31 to 41 (ESRKEDNDLKT) are compositionally biased toward basic and acidic residues. The span at 42–58 (SDSQPSDWIQKTATSET) shows a compositional bias: polar residues. LRR repeat units follow at residues 227 to 246 (SLEV…LNSI), 255 to 275 (NLKV…KILD), 283 to 293 (ELRKLDLSCNK), 311 to 331 (HLQV…MSLT), 339 to 360 (NLQE…NLLS), 367 to 387 (ALKS…TALA), 395 to 415 (ALEV…KLLL), 423 to 443 (SLQV…ALLA), and 453 to 475 (KLQK…MFCQ).

The chain is Leucine-rich repeat-containing protein 31 (LRRC31) from Homo sapiens (Human).